The following is a 642-amino-acid chain: Chaperone protein HtpG (642 aa).

Positions 1-349 (MSAATETEVR…SADLPLNVSR (349 aa)) are a; substrate-binding. The disordered stretch occupies residues 216 to 238 (ELPPAPPAKEGEEPEPPKTPEWE). Residues 224–236 (KEGEEPEPPKTPE) show a composition bias toward basic and acidic residues. Residues 350–570 (EILQQNRQVE…AHDMSATLER (221 aa)) form a b region. The segment at 571-642 (LLKEAGQEVP…VKRLNKLLMG (72 aa)) is c.

The protein belongs to the heat shock protein 90 family. As to quaternary structure, homodimer.

It is found in the cytoplasm. Its function is as follows. Molecular chaperone. Has ATPase activity. In Magnetococcus marinus (strain ATCC BAA-1437 / JCM 17883 / MC-1), this protein is Chaperone protein HtpG.